Consider the following 92-residue polypeptide: Small ribosomal subunit protein uS19c (92 aa).

Belongs to the universal ribosomal protein uS19 family.

It localises to the plastid. The protein resides in the chloroplast. Functionally, protein S19 forms a complex with S13 that binds strongly to the 16S ribosomal RNA. The protein is Small ribosomal subunit protein uS19c of Populus alba (White poplar).